Here is a 273-residue protein sequence, read N- to C-terminus: Large ribosomal subunit protein uL2c (273 aa).

It belongs to the universal ribosomal protein uL2 family. Part of the 50S ribosomal subunit.

The protein resides in the plastid. The protein localises to the apicoplast. This is Large ribosomal subunit protein uL2c (rpl2) from Eimeria tenella (Coccidian parasite).